A 428-amino-acid polypeptide reads, in one-letter code: 3-phosphoshikimate 1-carboxyvinyltransferase (428 aa).

Positions 20, 21, and 25 each coordinate 3-phosphoshikimate. K20 is a phosphoenolpyruvate binding site. Phosphoenolpyruvate-binding residues include G92 and R120. The 3-phosphoshikimate site is built by S166, Q168, D314, and K341. Q168 contributes to the phosphoenolpyruvate binding site. D314 acts as the Proton acceptor in catalysis. Positions 345 and 387 each coordinate phosphoenolpyruvate.

Belongs to the EPSP synthase family. Monomer.

Its subcellular location is the cytoplasm. The catalysed reaction is 3-phosphoshikimate + phosphoenolpyruvate = 5-O-(1-carboxyvinyl)-3-phosphoshikimate + phosphate. It functions in the pathway metabolic intermediate biosynthesis; chorismate biosynthesis; chorismate from D-erythrose 4-phosphate and phosphoenolpyruvate: step 6/7. Functionally, catalyzes the transfer of the enolpyruvyl moiety of phosphoenolpyruvate (PEP) to the 5-hydroxyl of shikimate-3-phosphate (S3P) to produce enolpyruvyl shikimate-3-phosphate and inorganic phosphate. In Listeria monocytogenes serotype 4a (strain HCC23), this protein is 3-phosphoshikimate 1-carboxyvinyltransferase.